We begin with the raw amino-acid sequence, 351 residues long: Signal recognition particle receptor FtsY (351 aa).

GTP-binding positions include G152 to T159, D235 to R239, and T299 to D302.

This sequence belongs to the GTP-binding SRP family. FtsY subfamily. As to quaternary structure, part of the signal recognition particle protein translocation system, which is composed of SRP and FtsY.

The protein localises to the cell membrane. It is found in the cytoplasm. The catalysed reaction is GTP + H2O = GDP + phosphate + H(+). Involved in targeting and insertion of nascent membrane proteins into the cytoplasmic membrane. Acts as a receptor for the complex formed by the signal recognition particle (SRP) and the ribosome-nascent chain (RNC). The chain is Signal recognition particle receptor FtsY from Metamycoplasma hominis (strain ATCC 23114 / DSM 25592 / NBRC 14850 / NCTC 10111 / PG21) (Mycoplasma hominis).